We begin with the raw amino-acid sequence, 195 residues long: Interferon tau-9 (195 aa).

Residues 1 to 23 (MAFVLSLLMALVLVSYGPGGSLG) form the signal peptide. Cystine bridges form between C24–C122 and C52–C162.

The protein belongs to the alpha/beta interferon family. IFN-alphaII subfamily. As to expression, constitutively and exclusively expressed in the mononuclear cells of the extraembryonic trophectoderm.

It is found in the secreted. Its function is as follows. Paracrine hormone primarily responsible for maternal recognition of pregnancy. Interacts with endometrial receptors, probably type I interferon receptors, and blocks estrogen receptor expression, preventing the estrogen-induced increase in oxytocin receptor expression in the endometrium. This results in the suppression of the pulsatile endometrial release of the luteolytic hormone prostaglandin F2-alpha, hindering the regression of the corpus luteum (luteolysis) and therefore a return to ovarian cyclicity. This, and a possible direct effect of IFN-tau on prostaglandin synthesis, leads in turn to continued ovarian progesterone secretion, which stimulates the secretion by the endometrium of the nutrients required for the growth of the conceptus. In summary, displays particularly high antiviral and antiproliferative potency concurrently with particular weak cytotoxicity, high antiluteolytic activity and immunomodulatory properties. In contrast with other IFNs, IFN-tau is not virally inducible. The protein is Interferon tau-9 (IFNT9) of Ovis aries (Sheep).